The sequence spans 443 residues: Dynein regulatory complex protein 9 (443 aa).

Disordered regions lie at residues 1 to 40 and 415 to 443; these read MEED…LPKE and GFKM…GKKK. Positions 393 to 422 constitute an IQ domain; sequence ELKSVIKLQAWWRGTMIRREIGGFKMPKDK. The span at 415-430 shows a compositional bias: basic and acidic residues; that stretch reads GFKMPKDKVDSKDSKG. Over residues 431 to 443 the composition is skewed to basic residues; sequence KGKGKDKRRGKKK.

Belongs to the DRC9 family. In terms of assembly, component of the nexin-dynein regulatory complex (N-DRC). Interacts (via IQ domain) with CALM when calcium levels are low. Does not interact with CALM in the presence of Ca(2+). Interacts with the HSP70 proteins HSPA1L and HSPA8. May form a complex with CAMK4 and HSP70.

It localises to the cytoplasm. Its subcellular location is the cell projection. It is found in the cilium. The protein localises to the flagellum. The protein resides in the cytoskeleton. It localises to the flagellum axoneme. Component of the nexin-dynein regulatory complex (N-DRC), a key regulator of ciliary/flagellar motility which maintains the alignment and integrity of the distal axoneme and regulates microtubule sliding in motile axonemes. Binds calmodulin when cellular Ca(2+) levels are low and thereby contributes to the regulation of calcium and calmodulin-dependent protein kinase IV (CAMK4) activity; contributes to the regulation of CAMK4 signaling cascades. Required for normal axoneme assembly in sperm flagella, normal sperm tail formation and for male fertility. The sequence is that of Dynein regulatory complex protein 9 (IQCG) from Macaca fascicularis (Crab-eating macaque).